The chain runs to 543 residues: Putative cysteine ligase BshC (543 aa).

The stretch at Asp-419 to Ile-440 forms a coiled coil.

The protein belongs to the BshC family.

Functionally, involved in bacillithiol (BSH) biosynthesis. May catalyze the last step of the pathway, the addition of cysteine to glucosamine malate (GlcN-Mal) to generate BSH. The polypeptide is Putative cysteine ligase BshC (Oceanobacillus iheyensis (strain DSM 14371 / CIP 107618 / JCM 11309 / KCTC 3954 / HTE831)).